A 52-amino-acid polypeptide reads, in one-letter code: DNA import protein CedA2 (52 aa).

Transmembrane regions (helical) follow at residues 1 to 21 (MKSY…VYIY) and 27 to 47 (ILVS…IIFE).

As to quaternary structure, forms a complex composed of CedA, CedA1 and CedA2.

The protein localises to the cell membrane. Its function is as follows. Part of the Ced system, which is involved in DNA import. The sequence is that of DNA import protein CedA2 from Sulfolobus acidocaldarius (strain ATCC 33909 / DSM 639 / JCM 8929 / NBRC 15157 / NCIMB 11770).